Reading from the N-terminus, the 625-residue chain is Threonine--tRNA ligase (625 aa).

The editing domain stretch occupies residues 1–147 (MRILLIHSDY…TIVPGEAKKE (147 aa)). Residues 206-505 (PHVKIMLEQE…MKKGKKPMYP (300 aa)) form a catalytic region. The Zn(2+) site is built by Cys-298, His-350, and His-474.

Belongs to the class-II aminoacyl-tRNA synthetase family. As to quaternary structure, homodimer. The cofactor is Zn(2+).

The protein resides in the cytoplasm. The catalysed reaction is tRNA(Thr) + L-threonine + ATP = L-threonyl-tRNA(Thr) + AMP + diphosphate + H(+). Functionally, catalyzes the attachment of threonine to tRNA(Thr) in a two-step reaction: L-threonine is first activated by ATP to form Thr-AMP and then transferred to the acceptor end of tRNA(Thr). Also edits incorrectly charged L-seryl-tRNA(Thr). This is Threonine--tRNA ligase from Thermococcus sibiricus (strain DSM 12597 / MM 739).